Here is a 415-residue protein sequence, read N- to C-terminus: Alpha-2Db adrenergic receptor (415 aa).

The Extracellular segment spans residues 1–33 (MDLSTITFLLPNSSEDTNGTSAPRLPPHSQCAS). 2 N-linked (GlcNAc...) asparagine glycosylation sites follow: N12 and N18. Residues 34 to 58 (VLIVLVVTVIILVTIVGNVLVVVAV) form a helical membrane-spanning segment. At 59–70 (FTSRALRAPQNL) the chain is on the cytoplasmic side. The helical transmembrane segment at 71–96 (FLVSLAAADILVATLVIPFSLANEVM) threads the bilayer. Over 97–106 (GYWYLGSTWC) the chain is Extracellular. Residues C106 and C179 are joined by a disulfide bond. Residues 107–129 (AFYLALDVLFCTSSIVHLCAISL) traverse the membrane as a helical segment. At 130 to 150 (DRYWSVTKAVSYNLKRTPRRI) the chain is on the cytoplasmic side. The helical transmembrane segment at 151–173 (KIMITVVWVISAVISFPPLLMTK) threads the bilayer. Residues 174–184 (HDELECLLNNE) are Extracellular-facing. A glycan (N-linked (GlcNAc...) asparagine) is linked at N183. A helical membrane pass occupies residues 185–208 (TWYILSSCIVSFFAPGLIMILVYC). The Cytoplasmic portion of the chain corresponds to 209-339 (RIYRVAKQRA…QMREKRFTFV (131 aa)). The segment at 234–299 (QSETCFVRKG…EGAQSCPKPN (66 aa)) is disordered. Residues 276–286 (NRHRNSRFAKS) are compositionally biased toward basic residues. Residues 340–363 (LAVVMGVFVLCWFPFFFTYSLHAI) form a helical membrane-spanning segment. Topologically, residues 364-376 (CRKSCTIPDSLFN) are extracellular. A helical transmembrane segment spans residues 377-397 (LFFWIGYCNSSVNPIIYTIFN). Residues 398 to 415 (RDFRKAFKKIMCRHSTRT) lie on the Cytoplasmic side of the membrane.

This sequence belongs to the G-protein coupled receptor 1 family. Adrenergic receptor subfamily. ADRA2D sub-subfamily.

The protein resides in the cell membrane. Alpha-2 adrenergic receptors mediate the catecholamine-induced inhibition of adenylate cyclase through the action of G proteins. The order of potency for this receptor is dexmedetomidine &gt; norepinephrine = epinephrine &gt; oxymetazoline. The polypeptide is Alpha-2Db adrenergic receptor (adra2db) (Danio rerio (Zebrafish)).